The following is a 326-amino-acid chain: Polycomb complex protein BMI-1-A (326 aa).

The RING-type zinc-finger motif lies at 18 to 57 (CVLCGGYFIDATTIIECLHSFCKTCIVRYLETSKYCPICD). The Nuclear localization signal motif lies at 81–95 (KLVPGLFKGEMKRRR). 2 disordered regions span residues 239–262 (NPHT…DKAG) and 274–326 (CIPS…ISSG). Residues 290 to 303 (ISSTINGTSSSSSS) show a composition bias toward low complexity.

In terms of assembly, component of a PRC1-like complex. Interacts with cbx4.

The protein localises to the nucleus. In terms of biological role, component of a Polycomb group (PcG) multiprotein PRC1-like complex, a complex class required to maintain the transcriptionally repressive state of many genes, including Hox genes, throughout development. PcG PRC1 complex acts via chromatin remodeling and modification of histones; it mediates monoubiquitination of histone H2A 'Lys-119', rendering chromatin heritably changed in its expressibility. In the PRC1 complex, it is required to stimulate the E3 ubiquitin-protein ligase activity of rnf2. The sequence is that of Polycomb complex protein BMI-1-A (bmi1a) from Xenopus laevis (African clawed frog).